The primary structure comprises 174 residues: Early nodulin-11 (174 aa).

The signal sequence occupies residues 1–25 (MASFFLYSLGLVFLSALTLVPLGLA). Residues 28–174 (SPSHNMPPNP…GNQPPPSIHF (147 aa)) are disordered. A compositionally biased stretch (pro residues) spans 53–65 (YNPPIYKPPPTYK). The segment covering 70–83 (KQPINKSPNKKPLL) has biased composition (low complexity). Positions 122–132 (PQKKPPSRKRP) are enriched in basic residues. 2 stretches are compositionally biased toward pro residues: residues 134 to 150 (NTPPNKKPPLPKPPVNK) and 159 to 174 (KRPPPYGNQPPPSIHF).

Belongs to the plant proline-rich protein superfamily. As to expression, expressed in cotyledons, leaf vasculature, stomatal guard cells and trichomes. In the embryo, expressed in embryo suspensors, the epidermis and underlying tissues of the cotyledons, hypocotyls, and radicle in maturing embryos, and the outer cell layer of the endosperm.

It localises to the secreted. It is found in the cell wall. Functionally, involved in the infection process during the plant-rhizobium interaction. Involved in actinorhizal root nodulation. Involved in symbiotic association with the nitrogen-fixing actinomycete Frankia spp. This Medicago truncatula (Barrel medic) protein is Early nodulin-11.